Here is a 451-residue protein sequence, read N- to C-terminus: Protein FAM117A (451 aa).

Residues 1–25 (MSGAAAGGRGGGSWGPGRGGAGGLR) are compositionally biased toward gly residues. 2 disordered regions span residues 1–83 (MSGA…RPQP) and 164–183 (RTKL…VQGD). Residues Ser29 and Ser67 each carry the phosphoserine modification. Positions 149–175 (TDHRKEITKLKQQLQRTKLSRSGKEKE) form a coiled coil. 2 positions are modified to phosphoserine: Ser193 and Ser213. The segment at 242–293 (DGHRAPAPPQNSSCDHSLLLEPGNLTSSPSVPLASPQPPSQASREEHQGATE) is disordered. 2 positions are modified to phosphoserine: Ser318 and Ser326. Residue Thr353 is modified to Phosphothreonine. Residues 403–451 (SPGSPLPTASPRAPRKGPEASKASSLPSEPWQRSPPSEESVLFQSSLVV) are disordered. Residues Ser412 and Ser426 each carry the phosphoserine modification. Polar residues predominate over residues 436-451 (SPPSEESVLFQSSLVV).

It belongs to the FAM117 family.

The chain is Protein FAM117A (Fam117a) from Mus musculus (Mouse).